The primary structure comprises 146 residues: Interleukin-13 (146 aa).

The signal sequence occupies residues 1–24; sequence MHPLLNPLLLALGLMALLLTTVIA. N52, N63, N71, and N86 each carry an N-linked (GlcNAc...) asparagine glycan. 2 cysteine pairs are disulfide-bonded: C62-C90 and C78-C104.

It belongs to the IL-4/IL-13 family. Interacts with IL13RA2.

Its subcellular location is the secreted. Its function is as follows. Cytokine that plays important roles in allergic inflammation and immune response to parasite infection. Synergizes with IL2 in regulating interferon-gamma synthesis. Stimulates B-cell proliferation, and activation of eosinophils, basophils, and mast cells. Plays an important role in controlling IL33 activity by modulating the production of transmembrane and soluble forms of interleukin-1 receptor-like 1/IL1RL1. Displays the capacity to antagonize Th1-driven proinflammatory immune response and downregulates synthesis of many proinflammatory cytokines including IL1, IL6, IL10, IL12 and TNF-alpha through a mechanism that partially involves suppression of NF-kappa-B. Also functions on nonhematopoietic cells, including endothelial cells where it induces vascular cell adhesion protein 1/VCAM1, which is important in the recruitment of eosinophils. Exerts its biological effects through its receptors which comprises the IL4R chain and the IL13RA1 chain, to activate JAK1 and TYK2, leading to the activation of STAT6. Aside from IL13RA1, another receptor IL13RA2 acts as a high affinity decoy for IL13 and mediates internalization and depletion of extracellular IL13. The polypeptide is Interleukin-13 (IL13) (Homo sapiens (Human)).